Reading from the N-terminus, the 55-residue chain is Neurotoxin B-II (55 aa).

Proline 10 is modified (hydroxyproline). 4 disulfides stabilise this stretch: cysteine 12/cysteine 48, cysteine 16/cysteine 52, cysteine 23/cysteine 41, and cysteine 26/cysteine 37.

Belongs to the worm B-toxin family.

Its subcellular location is the secreted. Functionally, this toxin increases the excitability of nerves by delaying the inactivation of the voltage-gated sodium channel (Nav). Only acts on some crustacean. Neurotoxin B-II is less abundant, but 15-fold more toxic than neurotoxin B-VI. In Cerebratulus lacteus (Milky ribbon worm), this protein is Neurotoxin B-II.